Consider the following 682-residue polypeptide: Cyclic nucleotide-gated cation channel (682 aa).

The disordered stretch occupies residues 1–41 (MTGQAALERSVSSHRLSVRSRLEGEAERAESAISRTDGDDD). Over 1-136 (MTGQAALERS…EGFVVSQSDD (136 aa)) the chain is Cytoplasmic. A compositionally biased stretch (basic and acidic residues) spans 20–30 (SRLEGEAERAE). The chain crosses the membrane as a helical span at residues 137–157 (IYYYWLFFIALASLYNWIMLV). The Extracellular segment spans residues 158 to 169 (ARACFDQLQDEN). A helical membrane pass occupies residues 170-190 (FFLWVGLDYLCDVIYILDTCI). Topologically, residues 191 to 218 (RLRTGYLEQGLLVKDLAKLRDNYIRTLQ) are cytoplasmic. The helical transmembrane segment at 219-239 (FKLDFLSILPTELLFFVTGYV) threads the bilayer. Residues 240–272 (PQLRFNRLLRFSRMFEFFDRTETRTNYPNAFRI) lie on the Extracellular side of the membrane. The helical transmembrane segment at 273-293 (CNLILYILVIIHWNACIYYAI) threads the bilayer. At 294–311 (SKALGLSSDTWVYSGQNK) the chain is on the cytoplasmic side. Residues 312–332 (TLSFCYVYCFYWSTLTLTTIG) traverse the membrane as a helical segment. Residues 333 to 343 (EMPPPVKDEEY) lie on the Extracellular side of the membrane. The chain crosses the membrane as a helical span at residues 344–364 (VFVVFDFLVGVLIFATIVGNV). The Cytoplasmic portion of the chain corresponds to 365-682 (GSMIANMNAT…SAETNSEEET (318 aa)). 3',5'-cyclic AMP contacts are provided by residues 455-577 (LLVE…QGLL), Glu514, and Arg529. Positions 649-682 (GEHAGVPTHTHADIHAQPETHTRTSAETNSEEET) are disordered. Positions 658-672 (THADIHAQPETHTRT) are enriched in basic and acidic residues.

It belongs to the cyclic nucleotide-gated cation channel (TC 1.A.1.5) family. As to expression, olfactory neurons.

The protein resides in the membrane. In terms of biological role, this cyclic nucleotide-gated channel is activated equally well by both cAMP and cGMP. The protein is Cyclic nucleotide-gated cation channel of Ictalurus punctatus (Channel catfish).